The primary structure comprises 177 residues: Adenine phosphoribosyltransferase (177 aa).

This sequence belongs to the purine/pyrimidine phosphoribosyltransferase family. In terms of assembly, homodimer.

The protein resides in the cytoplasm. The catalysed reaction is AMP + diphosphate = 5-phospho-alpha-D-ribose 1-diphosphate + adenine. Its pathway is purine metabolism; AMP biosynthesis via salvage pathway; AMP from adenine: step 1/1. Functionally, catalyzes a salvage reaction resulting in the formation of AMP, that is energically less costly than de novo synthesis. This Anaeromyxobacter sp. (strain Fw109-5) protein is Adenine phosphoribosyltransferase.